A 650-amino-acid chain; its full sequence is Chaperone protein DnaK (650 aa).

T200 is modified (phosphothreonine; by autocatalysis). Residues 611-634 show a composition bias toward low complexity; the sequence is AQQAGAAGAAGAAAEGASAQGGAQ. The interval 611–650 is disordered; that stretch reads AQQAGAAGAAGAAAEGASAQGGAQPPDDVVDADFKEVKKD.

It belongs to the heat shock protein 70 family.

Functionally, acts as a chaperone. This is Chaperone protein DnaK from Burkholderia pseudomallei (strain 1710b).